The sequence spans 124 residues: Small ribosomal subunit protein uS12 (124 aa).

3-methylthioaspartic acid is present on Asp-89.

This sequence belongs to the universal ribosomal protein uS12 family. Part of the 30S ribosomal subunit. Contacts proteins S8 and S17. May interact with IF1 in the 30S initiation complex.

With S4 and S5 plays an important role in translational accuracy. Its function is as follows. Interacts with and stabilizes bases of the 16S rRNA that are involved in tRNA selection in the A site and with the mRNA backbone. Located at the interface of the 30S and 50S subunits, it traverses the body of the 30S subunit contacting proteins on the other side and probably holding the rRNA structure together. The combined cluster of proteins S8, S12 and S17 appears to hold together the shoulder and platform of the 30S subunit. This chain is Small ribosomal subunit protein uS12, found in Shewanella frigidimarina (strain NCIMB 400).